The sequence spans 509 residues: Dihydrolipoyl dehydrogenase, mitochondrial (509 aa).

The transit peptide at 1 to 35 (MQSWSRVYCTLAKRGHFNRIAHGLQGVSAVPLRTY) directs the protein to the mitochondrion. Lys66 is subject to N6-acetyllysine; alternate. Position 66 is an N6-succinyllysine; alternate (Lys66). Residues 71–80 (EKNETLGGTC) and Lys89 contribute to the FAD site. Cysteines 80 and 85 form a disulfide. An N6-acetyllysine; alternate mark is found at Lys104, Lys122, Lys132, and Lys143. N6-succinyllysine; alternate is present on residues Lys104, Lys122, Lys132, and Lys143. Residue Gly154 participates in FAD binding. An N6-succinyllysine mark is found at Lys159 and Lys166. 183–185 (TGS) contacts FAD. Residues 220–227 (GAGVIGVE) and Glu243 contribute to the NAD(+) site. Residues Lys273 and Lys277 each carry the N6-succinyllysine modification. Val278 contributes to the NAD(+) binding site. Phosphoserine occurs at positions 285 and 297. Gly314 lines the NAD(+) pocket. Residue Lys346 is modified to N6-acetyllysine. Residues Asp355 and 361–364 (MLAH) contribute to the FAD site. An N6-acetyllysine; alternate modification is found at Lys410. Residue Lys410 is modified to N6-succinyllysine; alternate. N6-acetyllysine occurs at positions 417 and 420. Lys430 is subject to N6-succinyllysine. His487 acts as the Proton acceptor in catalysis. Residue Ser502 is modified to Phosphoserine. Lys505 carries the post-translational modification N6-acetyllysine; alternate. Residue Lys505 is modified to N6-succinyllysine; alternate.

The protein belongs to the class-I pyridine nucleotide-disulfide oxidoreductase family. In terms of assembly, homodimer. Part of the multimeric pyruvate dehydrogenase complex that contains multiple copies of pyruvate dehydrogenase (subunits PDHA (PDHA1 or PDHA2) and PDHB, E1), dihydrolipoamide acetyltransferase (DLAT, E2) and lipoamide dehydrogenase (DLD, E3). These subunits are bound to an inner core composed of about 48 DLAT and 12 PDHX molecules (by non covalent bonds). The 2-oxoglutarate dehydrogenase complex is composed of OGDH (2-oxoglutarate dehydrogenase; E1), DLST (dihydrolipoamide succinyltransferase; E2), DLD (dihydrolipoamide dehydrogenase; E3) and the assembly factor KGD4. It contains multiple copies of the three enzymatic components (E1, E2 and E3). In the nucleus, the 2-oxoglutarate dehydrogenase complex associates with KAT2A. Interacts with PDHX. FAD serves as cofactor. Tyrosine phosphorylated. As to expression, expressed in heart (at protein level).

The protein resides in the mitochondrion matrix. Its subcellular location is the nucleus. It is found in the cell projection. The protein localises to the cilium. It localises to the flagellum. The protein resides in the cytoplasmic vesicle. Its subcellular location is the secretory vesicle. It is found in the acrosome. The catalysed reaction is N(6)-[(R)-dihydrolipoyl]-L-lysyl-[protein] + NAD(+) = N(6)-[(R)-lipoyl]-L-lysyl-[protein] + NADH + H(+). Functionally, lipoamide dehydrogenase is a component of the glycine cleavage system as well as an E3 component of three alpha-ketoacid dehydrogenase complexes (pyruvate-, alpha-ketoglutarate-, and branched-chain amino acid-dehydrogenase complex). The 2-oxoglutarate dehydrogenase complex is mainly active in the mitochondrion. A fraction of the 2-oxoglutarate dehydrogenase complex also localizes in the nucleus and is required for lysine succinylation of histones: associates with KAT2A on chromatin and provides succinyl-CoA to histone succinyltransferase KAT2A. In monomeric form may have additional moonlighting function as serine protease. Involved in the hyperactivation of spermatazoa during capacitation and in the spermatazoal acrosome reaction. This is Dihydrolipoyl dehydrogenase, mitochondrial (DLD) from Sus scrofa (Pig).